The following is a 592-amino-acid chain: Aspartate--tRNA(Asp/Asn) ligase (592 aa).

Position 177 (glutamate 177) interacts with L-aspartate. Positions 201 to 204 (QIFK) are aspartate. L-aspartate is bound by residues arginine 223 and histidine 452. 223–225 (RDE) provides a ligand contact to ATP. Glutamate 486 is an ATP binding site. Arginine 493 is a binding site for L-aspartate. 538–541 (GIDR) contributes to the ATP binding site.

Belongs to the class-II aminoacyl-tRNA synthetase family. Type 1 subfamily. As to quaternary structure, homodimer.

The protein localises to the cytoplasm. It catalyses the reaction tRNA(Asx) + L-aspartate + ATP = L-aspartyl-tRNA(Asx) + AMP + diphosphate. Functionally, aspartyl-tRNA synthetase with relaxed tRNA specificity since it is able to aspartylate not only its cognate tRNA(Asp) but also tRNA(Asn). Reaction proceeds in two steps: L-aspartate is first activated by ATP to form Asp-AMP and then transferred to the acceptor end of tRNA(Asp/Asn). The sequence is that of Aspartate--tRNA(Asp/Asn) ligase from Anaplasma marginale (strain Florida).